Here is a 238-residue protein sequence, read N- to C-terminus: Monocyte to macrophage differentiation factor (238 aa).

Topologically, residues 1-28 (MRFRNRFQRFMNHRAPANGRYKPTCYEH) are cytoplasmic. Residues 29–49 (AANCYTHAFLIVPAIVGSALL) form a helical membrane-spanning segment. The Lumenal portion of the chain corresponds to 50-61 (HRLSDDCWEKIT). A helical membrane pass occupies residues 62–82 (AWIYGMGLCALFIVSTVFHIV). Topologically, residues 83–101 (SWKKSHLRTVEHCFHMCDR) are cytoplasmic. The chain crosses the membrane as a helical span at residues 102–122 (MVIYFFIAASYAPWLNLRELG). Pro-123 is a topological domain (lumenal). The chain crosses the membrane as a helical span at residues 124–144 (LASHMRWFIWLMAAGGTIYVF). Topologically, residues 145–151 (LYHEKYK) are cytoplasmic. The helical transmembrane segment at 152-172 (VVELFFYLTMGFSPALVVTSM) threads the bilayer. Topologically, residues 173 to 174 (NN) are lumenal. A helical transmembrane segment spans residues 175–195 (TDGLQELACGGLIYCLGVVFF). Over 196–198 (KSD) the chain is Cytoplasmic. Residues 199 to 219 (GIIPFAHAIWHLFVATAAAVH) form a helical membrane-spanning segment. Residues 220–238 (YYAIWKYLYRSPTDFIRHL) are Lumenal-facing.

This sequence belongs to the ADIPOR family.

It localises to the late endosome membrane. The protein resides in the lysosome membrane. Functionally, involved in the dynamics of lysosomal membranes associated with microglial activation following brain lesion. The sequence is that of Monocyte to macrophage differentiation factor from Mus musculus (Mouse).